The following is a 910-amino-acid chain: Seizure 6-like protein 2 (910 aa).

A signal peptide spans 1–27; that stretch reads MGTPRAQHPPPPQLLFLILLSCPWIQG. The Extracellular segment spans residues 28–844; sequence LPLKEEEILP…DPSRQLEGGN (817 aa). The interval 41 to 48 is O-glycosylated at one site; that stretch reads SETPTVAS. The tract at residues 65 to 152 is disordered; that stretch reads EMGYLPGSDR…PLGPEGGEEE (88 aa). A compositionally biased stretch (pro residues) spans 123–145; sequence LTPPPGTTAPPPPSPASPGPPLG. Residues Cys-173 and Cys-202 are joined by a disulfide bond. One can recognise a CUB 1 domain in the interval 173–286; that stretch reads CNNNISEGEG…GGFRIHYQAY (114 aa). N-linked (GlcNAc...) asparagine glycosylation is found at Asn-176, Asn-222, and Asn-247. The Sushi 1 domain maps to 288–347; the sequence is LSCGFPPRPAHGDVSVTDLHPGGTATFHCDSGYQLQGEETLICLNGTRPSWNGETPSCMA. 6 disulfide bridges follow: Cys-290/Cys-330, Cys-316/Cys-345, Cys-349/Cys-376, Cys-464/Cys-508, Cys-491/Cys-523, and Cys-527/Cys-553. 5 N-linked (GlcNAc...) asparagine glycosylation sites follow: Asn-332, Asn-355, Asn-373, Asn-473, and Asn-517. The 111-residue stretch at 349-459 folds into the CUB 2 domain; it reads CGGTIHNATL…LLLSLRFEAF (111 aa). Residues 462–525 form the Sushi 2 domain; the sequence is DRCFAPFLAH…WNDTEPACKA (64 aa). One can recognise a CUB 3 domain in the interval 527-638; the sequence is CGGELSEPAG…QGFVLHFKEV (112 aa). N-linked (GlcNAc...) asparagine glycosylation is present at Asn-641. Sushi domains are found at residues 642–701, 703–766, and 769–830; these read DTCP…ACQK, MTCA…KCAL, and EPCL…LCKV. 6 disulfides stabilise this stretch: Cys-644-Cys-686, Cys-672-Cys-699, Cys-705-Cys-747, Cys-733-Cys-764, Cys-771-Cys-813, and Cys-799-Cys-828. Residues 845 to 865 form a helical membrane-spanning segment; the sequence is LALAILLPLGLVIVLGSGVYI. Over 866–910 the chain is Cytoplasmic; that stretch reads YYTKLQGKSLFGFSGSHSYSPITVESDFSNPLYEAGDTREYEVSI.

The protein belongs to the SEZ6 family. O-glycosylated with core 1 or possibly core 8 glycans.

Its subcellular location is the cell membrane. The protein resides in the endoplasmic reticulum membrane. May contribute to specialized endoplasmic reticulum functions in neurons. This is Seizure 6-like protein 2 (SEZ6L2) from Homo sapiens (Human).